We begin with the raw amino-acid sequence, 185 residues long: dCTP deaminase (185 aa).

DCTP contacts are provided by residues 107–112, 131–133, glutamine 152, tyrosine 166, and glutamine 176; these read KSTYAR and TLE. The Proton donor/acceptor role is filled by glutamate 133.

Belongs to the dCTP deaminase family. In terms of assembly, homotrimer.

The enzyme catalyses dCTP + H2O + H(+) = dUTP + NH4(+). The protein operates within pyrimidine metabolism; dUMP biosynthesis; dUMP from dCTP (dUTP route): step 1/2. Its function is as follows. Catalyzes the deamination of dCTP to dUTP. In Neorickettsia sennetsu (strain ATCC VR-367 / Miyayama) (Ehrlichia sennetsu), this protein is dCTP deaminase.